The chain runs to 446 residues: Glutamine synthetase (446 aa).

A GS beta-grasp domain is found at Glu-18–Gly-103. A GS catalytic domain is found at Pro-110–Tyr-446. Glu-134 and Glu-136 together coordinate Mg(2+). Glu-186 contacts ATP. 2 residues coordinate Mg(2+): Glu-191 and Glu-198. L-glutamate-binding positions include Asn-242–Gly-243 and Gly-243. His-247 provides a ligand contact to Mg(2+). Ser-251 is an ATP binding site. L-glutamate contacts are provided by Arg-300, Glu-306, and Arg-318. ATP is bound by residues Arg-318 and Arg-323. A Mg(2+)-binding site is contributed by Glu-335. Arg-337 contributes to the L-glutamate binding site.

The protein belongs to the glutamine synthetase family. In terms of assembly, oligomer of 12 subunits arranged in the form of two hexagons. In its feedback-inhibited form, interacts with TnrA in order to block its DNA-binding activity. The cofactor is Mg(2+).

It localises to the cytoplasm. It catalyses the reaction L-glutamate + NH4(+) + ATP = L-glutamine + ADP + phosphate + H(+). Inhibited by glutamine. Glutamine synthetase (GS) is an unusual multitasking protein that functions as an enzyme, a transcription coregulator, and a chaperone in ammonium assimilation and in the regulation of genes involved in nitrogen metabolism. It catalyzes the ATP-dependent biosynthesis of glutamine from glutamate and ammonia. Feedback-inhibited GlnA also interacts with and regulates the activity of the transcriptional regulator TnrA. During nitrogen limitation, TnrA is in its DNA-binding active state and turns on the transcription of genes required for nitrogen assimilation. Under conditions of nitrogen excess, feedback-inhibited GlnA forms a stable complex with TnrA, which inhibits its DNA-binding activity. In contrast, feedback-inhibited GlnA acts as a chaperone to stabilize the DNA-binding activity of GlnR, which represses the transcription of nitrogen assimilation genes. The sequence is that of Glutamine synthetase from Staphylococcus aureus (strain MRSA252).